The primary structure comprises 673 residues: UvrABC system protein B (673 aa).

The Helicase ATP-binding domain occupies 26-183 (EGLEDGLAHQ…RRLAELQYTR (158 aa)). 39 to 46 (GVTGSGKT) serves as a coordination point for ATP. Positions 92 to 115 (YYDYYQPEAYVPSSDTFIEKDASV) match the Beta-hairpin motif. One can recognise a Helicase C-terminal domain in the interval 431-597 (QVDDLLSEIR…GLNKKVVDIL (167 aa)). Residues 633-668 (QQKIHELEGQMMQHAQNLEFEEAAEIRDQLHQLREL) form the UVR domain.

Belongs to the UvrB family. In terms of assembly, forms a heterotetramer with UvrA during the search for lesions. Interacts with UvrC in an incision complex.

The protein localises to the cytoplasm. Functionally, the UvrABC repair system catalyzes the recognition and processing of DNA lesions. A damage recognition complex composed of 2 UvrA and 2 UvrB subunits scans DNA for abnormalities. Upon binding of the UvrA(2)B(2) complex to a putative damaged site, the DNA wraps around one UvrB monomer. DNA wrap is dependent on ATP binding by UvrB and probably causes local melting of the DNA helix, facilitating insertion of UvrB beta-hairpin between the DNA strands. Then UvrB probes one DNA strand for the presence of a lesion. If a lesion is found the UvrA subunits dissociate and the UvrB-DNA preincision complex is formed. This complex is subsequently bound by UvrC and the second UvrB is released. If no lesion is found, the DNA wraps around the other UvrB subunit that will check the other stand for damage. The sequence is that of UvrABC system protein B from Citrobacter koseri (strain ATCC BAA-895 / CDC 4225-83 / SGSC4696).